Reading from the N-terminus, the 341-residue chain is Casein kinase I isoform alpha (341 aa).

Residues 16–284 (YKLIRKIGSG…YLRQLFRILF (269 aa)) form the Protein kinase domain. ATP contacts are provided by residues 22 to 30 (IGSGSFGDI) and Lys-45. The active-site Proton acceptor is Asp-135. The segment covering 306 to 320 (QSQSSGVPGTNTTTQ) has biased composition (polar residues). Residues 306 to 341 (QSQSSGVPGTNTTTQGATVPSAGVPAGVAPGGTTPQ) form a disordered region. The segment covering 321–341 (GATVPSAGVPAGVAPGGTTPQ) has biased composition (low complexity).

It belongs to the protein kinase superfamily. CK1 Ser/Thr protein kinase family. Casein kinase I subfamily.

The enzyme catalyses L-seryl-[protein] + ATP = O-phospho-L-seryl-[protein] + ADP + H(+). It carries out the reaction L-threonyl-[protein] + ATP = O-phospho-L-threonyl-[protein] + ADP + H(+). This is Casein kinase I isoform alpha (kin-19) from Caenorhabditis elegans.